The sequence spans 390 residues: Protein SOSEKI 4 (390 aa).

Residues 22-115 (RMAEVLYVLS…YALKATKRFD (94 aa)) are DIX-like oligomerization domain. Disordered stretches follow at residues 210–247 (KSNS…NRTG) and 291–321 (RESN…SGGS). A compositionally biased stretch (polar residues) spans 304–321 (PSVQAETHVSKLSKSGGS).

It belongs to the SOSEKI family. In terms of assembly, homodimer. Forms long polymer filaments with other SOKs proteins polymers crucial for polar localization and biological activity.

It is found in the cell membrane. In terms of biological role, SOSEKI proteins locally interpret global polarity cues and can influence cell division orientation to coordinate cell polarization relative to body axes. The chain is Protein SOSEKI 4 from Physcomitrium patens (Spreading-leaved earth moss).